A 347-amino-acid chain; its full sequence is Lipoyl synthase (347 aa).

Residues Cys-77, Cys-82, Cys-88, Cys-103, Cys-107, Cys-110, and Ser-317 each coordinate [4Fe-4S] cluster. One can recognise a Radical SAM core domain in the interval 89–306 (FADGTATFMI…MDYGKKIGFF (218 aa)).

It belongs to the radical SAM superfamily. Lipoyl synthase family. Requires [4Fe-4S] cluster as cofactor.

The protein resides in the cytoplasm. It catalyses the reaction [[Fe-S] cluster scaffold protein carrying a second [4Fe-4S](2+) cluster] + N(6)-octanoyl-L-lysyl-[protein] + 2 oxidized [2Fe-2S]-[ferredoxin] + 2 S-adenosyl-L-methionine + 4 H(+) = [[Fe-S] cluster scaffold protein] + N(6)-[(R)-dihydrolipoyl]-L-lysyl-[protein] + 4 Fe(3+) + 2 hydrogen sulfide + 2 5'-deoxyadenosine + 2 L-methionine + 2 reduced [2Fe-2S]-[ferredoxin]. It participates in protein modification; protein lipoylation via endogenous pathway; protein N(6)-(lipoyl)lysine from octanoyl-[acyl-carrier-protein]: step 2/2. Its function is as follows. Catalyzes the radical-mediated insertion of two sulfur atoms into the C-6 and C-8 positions of the octanoyl moiety bound to the lipoyl domains of lipoate-dependent enzymes, thereby converting the octanoylated domains into lipoylated derivatives. The protein is Lipoyl synthase of Psychrobacter arcticus (strain DSM 17307 / VKM B-2377 / 273-4).